Reading from the N-terminus, the 56-residue chain is MSHESVWNSRPRTYGKGSRSCRVCTHSAGLIRKYGLNICRQCFREKANDIGFTKHR.

Positions 21, 24, 39, and 42 each coordinate Zn(2+).

This sequence belongs to the universal ribosomal protein uS14 family. In terms of assembly, component of the small ribosomal subunit (SSU). Mature N.crassa ribosomes consist of a small (40S) and a large (60S) subunit. The 40S small subunit contains 1 molecule of ribosomal RNA (18S rRNA) and at least 32 different proteins. The large 60S subunit contains 3 rRNA molecules (26S, 5.8S and 5S rRNA) and at least 42 different proteins. Zn(2+) serves as cofactor.

The protein resides in the cytoplasm. Component of the ribosome, a large ribonucleoprotein complex responsible for the synthesis of proteins in the cell. The small ribosomal subunit (SSU) binds messenger RNAs (mRNAs) and translates the encoded message by selecting cognate aminoacyl-transfer RNA (tRNA) molecules. The large subunit (LSU) contains the ribosomal catalytic site termed the peptidyl transferase center (PTC), which catalyzes the formation of peptide bonds, thereby polymerizing the amino acids delivered by tRNAs into a polypeptide chain. The nascent polypeptides leave the ribosome through a tunnel in the LSU and interact with protein factors that function in enzymatic processing, targeting, and the membrane insertion of nascent chains at the exit of the ribosomal tunnel. In Neurospora crassa (strain ATCC 24698 / 74-OR23-1A / CBS 708.71 / DSM 1257 / FGSC 987), this protein is Small ribosomal subunit protein uS14 (rps-29).